The sequence spans 500 residues: Glutelin type-B 4 (500 aa).

Residues 1–24 form the signal peptide; it reads MATIAFSRLSIYFCVLLLCHGSMA. 2 cysteine pairs are disulfide-bonded: cysteine 45–cysteine 78 and cysteine 121–cysteine 310. Cupin type-1 domains follow at residues 50–245 and 316–465; these read LQAF…LVAK and LNIE…EQAR. A compositionally biased stretch (polar residues) spans 481–493; sequence RYQQQTYPGFSNE. The tract at residues 481 to 500 is disordered; sequence RYQQQTYPGFSNESENEALE.

It belongs to the 11S seed storage protein (globulins) family. As to quaternary structure, hexamer; each subunit is composed of an acidic and a basic chain derived from a single precursor and linked by a disulfide bond. Expressed in endosperm (at protein level).

In terms of biological role, seed storage protein. This Oryza sativa subsp. japonica (Rice) protein is Glutelin type-B 4 (GLUB4).